A 1248-amino-acid chain; its full sequence is von Willebrand factor A domain-containing protein 5B2 (1248 aa).

A VIT domain is found at 1–138; the sequence is MPGLYCPTSW…TMTVTLCSSR (138 aa). Positions 184–204 are disordered; the sequence is VGSPEEERPTWEQPTATPDVF. The VWFA domain occupies 354-527; that stretch reads ELLFLLDGSG…KALEPALSDI (174 aa). Disordered stretches follow at residues 590–650, 672–710, 751–789, 1008–1037, and 1126–1168; these read PEEV…SSDT, SASP…QQGC, ALAG…EPGQ, SKSA…RLSL, and DSAT…SSDL. Residues 595-619 are compositionally biased toward polar residues; that stretch reads SATSPGTEPTHTTEPLGTGTVSAEL. 3 stretches are compositionally biased toward low complexity: residues 684-701, 751-764, and 780-789; these read SSES…GSRP, ALAG…SGRA, and PDGLGPEPGQ. Low complexity predominate over residues 1127-1145; that stretch reads SATASCSQSPSSGSEGPGQ. The segment covering 1159-1168 has biased composition (basic and acidic residues); it reads GMERQDSSDL.

The chain is von Willebrand factor A domain-containing protein 5B2 (Vwa5b2) from Mus musculus (Mouse).